Here is a 177-residue protein sequence, read N- to C-terminus: ATP synthase subunit delta, chloroplastic (177 aa).

This sequence belongs to the ATPase delta chain family. As to quaternary structure, F-type ATPases have 2 components, F(1) - the catalytic core - and F(0) - the membrane proton channel. F(1) has five subunits: alpha(3), beta(3), gamma(1), delta(1), epsilon(1). CF(0) has four main subunits: a(1), b(1), b'(1) and c(10-14). The alpha and beta chains form an alternating ring which encloses part of the gamma chain. F(1) is attached to F(0) by a central stalk formed by the gamma and epsilon chains, while a peripheral stalk is formed by the delta, b and b' chains.

The protein resides in the plastid. It is found in the chloroplast thylakoid membrane. F(1)F(0) ATP synthase produces ATP from ADP in the presence of a proton or sodium gradient. F-type ATPases consist of two structural domains, F(1) containing the extramembraneous catalytic core and F(0) containing the membrane proton channel, linked together by a central stalk and a peripheral stalk. During catalysis, ATP synthesis in the catalytic domain of F(1) is coupled via a rotary mechanism of the central stalk subunits to proton translocation. In terms of biological role, this protein is part of the stalk that links CF(0) to CF(1). It either transmits conformational changes from CF(0) to CF(1) or is implicated in proton conduction. This Galdieria sulphuraria (Red alga) protein is ATP synthase subunit delta, chloroplastic.